We begin with the raw amino-acid sequence, 258 residues long: Triosephosphate isomerase (258 aa).

Asn-9–Lys-11 is a substrate binding site. His-105 acts as the Electrophile in catalysis. Glu-176 acts as the Proton acceptor in catalysis. Substrate-binding residues include Gly-182 and Ser-214.

Belongs to the triosephosphate isomerase family. In terms of assembly, homodimer.

Its subcellular location is the cytoplasm. The catalysed reaction is D-glyceraldehyde 3-phosphate = dihydroxyacetone phosphate. It functions in the pathway carbohydrate biosynthesis; gluconeogenesis. Its pathway is carbohydrate degradation; glycolysis; D-glyceraldehyde 3-phosphate from glycerone phosphate: step 1/1. In terms of biological role, involved in the gluconeogenesis. Catalyzes stereospecifically the conversion of dihydroxyacetone phosphate (DHAP) to D-glyceraldehyde-3-phosphate (G3P). In Mycoplasmopsis agalactiae (strain NCTC 10123 / CIP 59.7 / PG2) (Mycoplasma agalactiae), this protein is Triosephosphate isomerase.